The primary structure comprises 561 residues: Putative transport protein KPN78578_08530 (561 aa).

A run of 5 helical transmembrane segments spans residues 8–28 (LLNG…LCLG), 37–57 (LGNS…HFAI), 66–86 (FMLF…SIFF), 94–114 (MLAL…GKVF), and 158–178 (HLSL…IVGA). RCK C-terminal domains follow at residues 202–288 (LDTD…SFRN) and 292–373 (VFDR…RIGF). The next 5 membrane-spanning stretches (helical) occupy residues 383–403 (LLAF…TFQF), 406–426 (FSFG…LGFL), 447–467 (FGLM…INNG), 478–498 (AGLI…AYVL), and 540–560 (AIAN…WPGL).

Belongs to the AAE transporter (TC 2.A.81) family. YbjL subfamily.

Its subcellular location is the cell membrane. The protein is Putative transport protein KPN78578_08530 of Klebsiella pneumoniae subsp. pneumoniae (strain ATCC 700721 / MGH 78578).